The chain runs to 626 residues: Basic helix-loop-helix ARNT-like protein 1 (626 aa).

Positions 1–60 (MADQRMDISSTISDFMSPGPTDLLSSSLGTSGVDCNRKRKGSSTDYQESMDTDKDDPHGR) are disordered. Position 17 is a phosphoserine; by GSK3-beta (S17). Positions 17–32 (SPGPTDLLSSSLGTSG) are enriched in low complexity. Phosphothreonine; by GSK3-beta is present on T21. The Nuclear localization signal motif lies at 36–41 (NRKRKG). Basic and acidic residues predominate over residues 51 to 60 (DTDKDDPHGR). Residues 72-125 (NAREAHSQIEKRRRDKMNSFIDELASLVPTCNAMSRKLDKLTVLRMAVQHMKTL) form the bHLH domain. S78 bears the Phosphoserine mark. Phosphoserine; by CK2 is present on S90. The Nuclear export signal 1 motif lies at 142–152 (LSDDELKHLIL). In terms of domain architecture, PAS 1 spans 143–215 (SDDELKHLIL…EQLSSSDTAP (73 aa)). A Glycyl lysine isopeptide (Lys-Gly) (interchain with G-Cter in SUMO2 and SUMO3) cross-link involves residue K252. K259 is covalently cross-linked (Glycyl lysine isopeptide (Lys-Gly) (interchain with G-Cter in SUMO); alternate). K259 is covalently cross-linked (Glycyl lysine isopeptide (Lys-Gly) (interchain with G-Cter in SUMO2); alternate). The region spanning 326–396 (PQPAGGDIKV…ECHRQVLQTR (71 aa)) is the PAS 2 domain. The Nuclear export signal 2 signature appears at 361–369 (LAYLPQELL). The region spanning 402 to 445 (NCYKFKIKDGSFITLRSRWFSFMNPWTKEVEYIVSTNTVVLANV) is the PAC domain. 2 disordered regions span residues 458–493 (ASPH…AGAG) and 511–596 (GSSP…PSND). The span at 484 to 493 (IPGGTRAGAG) shows a compositional bias: gly residues. Positions 508 to 588 (RIRGSSPSSC…ISIDMIDNDQ (81 aa)) are interaction with CIART. Positions 511–521 (GSSPSSCGSSP) are enriched in low complexity. K538 is modified (N6-acetyllysine).

Component of the circadian clock oscillator which includes the CRY1/2 proteins, CLOCK or NPAS2, BMAL1 or BMAL2, CSNK1D and/or CSNK1E, TIMELESS and the PER1/2/3 proteins. Forms a heterodimer with CLOCK. The CLOCK-BMAL1 heterodimer is required for E-box-dependent transactivation, for CLOCK nuclear translocation and degradation, and, for phosphorylation of both CLOCK and BMAL1. Part of a nuclear complex which also includes RACK1 and PRKCA; RACK1 and PRKCA are recruited to the complex in a circadian manner. Interacts with NPAS2. Interacts with EZH2. Interacts with SUMO3. Interacts with SIRT1. Interacts with AHR. Interacts with ID1, ID2 and ID3. Interacts with DDX4. Interacts with OGT. Interacts with EED and SUZ12. Interacts with MTA1. Interacts with CIART. Interacts with HSP90. Interacts with KAT2B and EP300. Interacts with BHLHE40/DEC1 and BHLHE41/DEC2. Interacts with RELB and the interaction is enhanced in the presence of CLOCK. Interacts with PER1, PER2, CRY1 and CRY2 and this interaction requires a translocation to the nucleus. Interaction of the CLOCK-BMAL1 heterodimer with PER or CRY inhibits transcription activation. Interaction of the CLOCK-BMAL1 with CRY1 is independent of DNA but with PER2 is off DNA. The CLOCK-BMAL1 heterodimer interacts with GSK3B. Interacts with KDM5A. Interacts with KMT2A; in a circadian manner. Interacts with UBE3A. Interacts with PRKCG. Interacts with MAGEL2. Interacts with NCOA2. Interacts with THRAP3. The CLOCK-BMAL1 heterodimer interacts with PASD1. Interacts with PASD1. Interacts with USP9X. Interacts with PIWIL2 (via PIWI domain). Interacts with HDAC3. Interacts with HNF4A. Post-translationally, ubiquitinated, leading to its proteasomal degradation. Deubiquitinated by USP9X. O-glycosylated; contains O-GlcNAc. O-glycosylation by OGT prevents protein degradation by inhibiting ubiquitination. It also stabilizes the CLOCK-BMAL1 heterodimer thereby increasing CLOCK-BMAL1-mediated transcription of genes in the negative loop of the circadian clock such as PER1/2/3 and CRY1/2. In terms of processing, acetylated on Lys-538 by CLOCK during the repression phase of the circadian cycle. Acetylation facilitates recruitment of CRY1 protein and initiates the repression phase of the circadian cycle. Acetylated at Lys-538 by KAT5 during the activation phase of the cycle, leading to recruitment of the positive transcription elongation factor b (P-TEFb) and BRD4, followed by productive elongation of circadian transcripts. Deacetylated by SIRT1, which may result in decreased protein stability. Post-translationally, phosphorylated upon dimerization with CLOCK. Phosphorylation enhances the transcriptional activity, alters the subcellular localization and decreases the stability of the CLOCK-BMAL1 heterodimer by promoting its degradation. Phosphorylation shows circadian variations in the liver with a peak between CT10 to CT14. Phosphorylation at Ser-90 by CK2 is essential for its nuclear localization, its interaction with CLOCK and controls CLOCK nuclear entry. Dephosphorylation at Ser-78 is important for dimerization with CLOCK and transcriptional activity. Sumoylated on Lys-259 upon dimerization with CLOCK. Predominantly conjugated to poly-SUMO2/3 rather than SUMO1 and the level of these conjugates undergo rhythmic variation, peaking at CT9-CT12. Sumoylation localizes it exclusively to the PML body and promotes its ubiquitination in the PML body, ubiquitin-dependent proteasomal degradation and the transcriptional activity of the CLOCK-BMAL1 heterodimer. In terms of processing, undergoes lysosome-mediated degradation in a time-dependent manner in the liver. As to expression, highly expressed in the suprachiasmatic nucleus (SCN). Also expressed in all other tissues examined including kidney, intestine, liver, heart, spleen, brain, muscle, lung, harderian gland and eye. Low expression in kidney and spleen.

It localises to the nucleus. The protein resides in the cytoplasm. The protein localises to the PML body. Its function is as follows. Transcriptional activator which forms a core component of the circadian clock. The circadian clock, an internal time-keeping system, regulates various physiological processes through the generation of approximately 24 hour circadian rhythms in gene expression, which are translated into rhythms in metabolism and behavior. It is derived from the Latin roots 'circa' (about) and 'diem' (day) and acts as an important regulator of a wide array of physiological functions including metabolism, sleep, body temperature, blood pressure, endocrine, immune, cardiovascular, and renal function. Consists of two major components: the central clock, residing in the suprachiasmatic nucleus (SCN) of the brain, and the peripheral clocks that are present in nearly every tissue and organ system. Both the central and peripheral clocks can be reset by environmental cues, also known as Zeitgebers (German for 'timegivers'). The predominant Zeitgeber for the central clock is light, which is sensed by retina and signals directly to the SCN. The central clock entrains the peripheral clocks through neuronal and hormonal signals, body temperature and feeding-related cues, aligning all clocks with the external light/dark cycle. Circadian rhythms allow an organism to achieve temporal homeostasis with its environment at the molecular level by regulating gene expression to create a peak of protein expression once every 24 hours to control when a particular physiological process is most active with respect to the solar day. Transcription and translation of core clock components (CLOCK, NPAS2, BMAL1, BMAL2, PER1, PER2, PER3, CRY1 and CRY2) plays a critical role in rhythm generation, whereas delays imposed by post-translational modifications (PTMs) are important for determining the period (tau) of the rhythms (tau refers to the period of a rhythm and is the length, in time, of one complete cycle). A diurnal rhythm is synchronized with the day/night cycle, while the ultradian and infradian rhythms have a period shorter and longer than 24 hours, respectively. Disruptions in the circadian rhythms contribute to the pathology of cardiovascular diseases, cancer, metabolic syndromes and aging. A transcription/translation feedback loop (TTFL) forms the core of the molecular circadian clock mechanism. Transcription factors, CLOCK or NPAS2 and BMAL1 or BMAL2, form the positive limb of the feedback loop, act in the form of a heterodimer and activate the transcription of core clock genes and clock-controlled genes (involved in key metabolic processes), harboring E-box elements (5'-CACGTG-3') within their promoters. The core clock genes: PER1/2/3 and CRY1/2 which are transcriptional repressors form the negative limb of the feedback loop and interact with the CLOCK|NPAS2-BMAL1|BMAL2 heterodimer inhibiting its activity and thereby negatively regulating their own expression. This heterodimer also activates nuclear receptors NR1D1/2 and RORA/B/G, which form a second feedback loop and which activate and repress BMAL1 transcription, respectively. BMAL1 positively regulates myogenesis and negatively regulates adipogenesis via the transcriptional control of the genes of the canonical Wnt signaling pathway. Plays a role in normal pancreatic beta-cell function; regulates glucose-stimulated insulin secretion via the regulation of antioxidant genes NFE2L2/NRF2 and its targets SESN2, PRDX3, CCLC and CCLM. Negatively regulates the mTORC1 signaling pathway; regulates the expression of MTOR and DEPTOR. Controls diurnal oscillations of Ly6C inflammatory monocytes; rhythmic recruitment of the PRC2 complex imparts diurnal variation to chemokine expression that is necessary to sustain Ly6C monocyte rhythms. Regulates the expression of HSD3B2, STAR, PTGS2, CYP11A1, CYP19A1 and LHCGR in the ovary and also the genes involved in hair growth. Plays an important role in adult hippocampal neurogenesis by regulating the timely entry of neural stem/progenitor cells (NSPCs) into the cell cycle and the number of cell divisions that take place prior to cell-cycle exit. Regulates the circadian expression of CIART and KLF11. The CLOCK-BMAL1 heterodimer regulates the circadian expression of SERPINE1/PAI1, VWF, B3, CCRN4L/NOC, NAMPT, DBP, MYOD1, PPARGC1A, PPARGC1B, SIRT1, GYS2, F7, NGFR, GNRHR, BHLHE40/DEC1, ATF4, MTA1, KLF10 and also genes implicated in glucose and lipid metabolism. Promotes rhythmic chromatin opening, regulating the DNA accessibility of other transcription factors. The NPAS2-BMAL1 heterodimer positively regulates the expression of MAOA, F7 and LDHA and modulates the circadian rhythm of daytime contrast sensitivity by regulating the rhythmic expression of adenylate cyclase type 1 (ADCY1) in the retina. The preferred binding motif for the CLOCK-BMAL1 heterodimer is 5'-CACGTGA-3', which contains a flanking adenine nucleotide at the 3-prime end of the canonical 6-nucleotide E-box sequence. CLOCK specifically binds to the half-site 5'-CAC-3', while BMAL1 binds to the half-site 5'-GTGA-3'. The CLOCK-BMAL1 heterodimer also recognizes the non-canonical E-box motifs 5'-AACGTGA-3' and 5'-CATGTGA-3'. Essential for the rhythmic interaction of CLOCK with ASS1 and plays a critical role in positively regulating CLOCK-mediated acetylation of ASS1. Plays a role in protecting against lethal sepsis by limiting the expression of immune checkpoint protein CD274 in macrophages in a PKM2-dependent manner. Regulates the diurnal rhythms of skeletal muscle metabolism via transcriptional activation of genes promoting triglyceride synthesis (DGAT2) and metabolic efficiency (COQ10B). This chain is Basic helix-loop-helix ARNT-like protein 1 (Bmal1), found in Nannospalax galili (Northern Israeli blind subterranean mole rat).